Consider the following 90-residue polypeptide: Small ribosomal subunit protein uS15 (90 aa).

Belongs to the universal ribosomal protein uS15 family. Part of the 30S ribosomal subunit. Forms a bridge to the 50S subunit in the 70S ribosome, contacting the 23S rRNA.

Functionally, one of the primary rRNA binding proteins, it binds directly to 16S rRNA where it helps nucleate assembly of the platform of the 30S subunit by binding and bridging several RNA helices of the 16S rRNA. Forms an intersubunit bridge (bridge B4) with the 23S rRNA of the 50S subunit in the ribosome. The polypeptide is Small ribosomal subunit protein uS15 (Wolbachia pipientis wMel).